Here is a 152-residue protein sequence, read N- to C-terminus: UPF0178 protein SAR0734 (152 aa).

It belongs to the UPF0178 family.

This chain is UPF0178 protein SAR0734, found in Staphylococcus aureus (strain MRSA252).